Here is a 341-residue protein sequence, read N- to C-terminus: Radial spoke head 14 homolog (341 aa).

ARM repeat units follow at residues 16-55 (PTKA…DLMH), 57-96 (PEYV…IMAT), 99-138 (VGRV…LAQL), 139-178 (PKGA…LCLQ), 180-217 (DATE…AISI), 219-258 (LDGK…HATV), 260-300 (TEGK…MLAE), and 302-339 (PEGR…VIEW).

This sequence belongs to the flagellar radial spoke RSP14 family. Component of the axonemal radial spoke complex 1 (RS1), at least composed of spoke head proteins RSPH1, RSPH3, RSPH9 and the cilia-specific component RSPH4A or sperm-specific component RSPH6A, spoke stalk proteins RSPH14, DNAJB13, DYDC1, ROPN1L and NME5, and the anchor protein IQUB.

The protein localises to the cytoplasm. The protein resides in the cytoskeleton. It localises to the flagellum axoneme. Functionally, functions as part of axonemal radial spoke complexes that play an important part in the motility of sperm and cilia. In Mus musculus (Mouse), this protein is Radial spoke head 14 homolog.